A 1291-amino-acid polypeptide reads, in one-letter code: DNA-directed RNA polymerase subunit beta (1291 aa).

This sequence belongs to the RNA polymerase beta chain family. As to quaternary structure, the RNAP catalytic core consists of 2 alpha, 1 beta, 1 beta' and 1 omega subunit. When a sigma factor is associated with the core the holoenzyme is formed, which can initiate transcription.

It carries out the reaction RNA(n) + a ribonucleoside 5'-triphosphate = RNA(n+1) + diphosphate. In terms of biological role, DNA-dependent RNA polymerase catalyzes the transcription of DNA into RNA using the four ribonucleoside triphosphates as substrates. The chain is DNA-directed RNA polymerase subunit beta from Cytophaga hutchinsonii (strain ATCC 33406 / DSM 1761 / CIP 103989 / NBRC 15051 / NCIMB 9469 / D465).